A 127-amino-acid chain; its full sequence is Large ribosomal subunit protein bL17 (127 aa).

It belongs to the bacterial ribosomal protein bL17 family. As to quaternary structure, part of the 50S ribosomal subunit. Contacts protein L32.

The protein is Large ribosomal subunit protein bL17 of Pelobacter propionicus (strain DSM 2379 / NBRC 103807 / OttBd1).